Consider the following 151-residue polypeptide: Large ribosomal subunit protein bL9 (151 aa).

It belongs to the bacterial ribosomal protein bL9 family.

Binds to the 23S rRNA. This Lactobacillus acidophilus (strain ATCC 700396 / NCK56 / N2 / NCFM) protein is Large ribosomal subunit protein bL9.